Consider the following 204-residue polypeptide: Carbon disulfide hydrolase (204 aa).

3 residues coordinate Zn(2+): C35, H88, and C91.

The protein belongs to the beta-class carbonic anhydrase family. In terms of assembly, forms a hexadecameric catenane homooligomer, through interactions of two interlocked octameric rings. Exists as both octamers and hexadecamers in solution. Requires Zn(2+) as cofactor.

The enzyme catalyses carbon disulfide + 2 H2O = 2 hydrogen sulfide + CO2 + 2 H(+). The protein operates within sulfur metabolism; hydrogen sulfide biosynthesis. Its function is as follows. Catalyzes the conversion of carbon disulfide into hydrogen sulfide and carbon dioxide, with carbonyl sulfide as an intermediate. Likely plays a key role in sulfur metabolism that allows Acidianus sp. A1-3 to grow on carbon disulfide as the main carbon and energy source. Does not show carbonic anhydrase activity (hydration of CO(2) to carbonate). This is Carbon disulfide hydrolase from Acidianus sp. (strain A1-3).